A 485-amino-acid polypeptide reads, in one-letter code: Podocalyxin (485 aa).

Residues 1 to 24 (MRPTLALSALLLLQLLLLSTPSLS) form the signal peptide. The disordered stretch occupies residues 22–267 (SLSQDNGNKT…STPSSTWTSG (246 aa)). The Extracellular portion of the chain corresponds to 25-386 (QDNGNKTDTS…PPEVNEDRFS (362 aa)). Residues 26–57 (DNGNKTDTSDITSIDQNQDKPATNQPSNATPK) show a composition bias toward polar residues. 2 N-linked (GlcNAc...) asparagine glycosylation sites follow: N29 and N82. Residues 58 to 109 (SSVQPPTPTSISTSSPDPKATQSSNSSVTTTSDSTTDRTSSSTSTVPTTSNS) show a composition bias toward low complexity. Polar residues-rich tracts occupy residues 110 to 128 (GQTVSSGGKSSDKITTALP) and 135 to 149 (NASSQPTDLNTSTKL). N-linked (GlcNAc...) asparagine glycans are attached at residues N135, N144, and N156. Residues 150 to 161 (PSTPTTNSTASP) are compositionally biased toward low complexity. Polar residues-rich tracts occupy residues 163-176 (QPVSHSEGQHTTVQ), 186-228 (DNTT…QPTG), and 235-253 (SVPTTEEFTHSTSSWTPVV). N-linked (GlcNAc...) asparagine glycosylation occurs at N187. A compositionally biased stretch (low complexity) spans 254-267 (SQGPSTPSSTWTSG). A glycan (N-linked (GlcNAc...) asparagine) is linked at N287. The helical transmembrane segment at 387–407 (LPLIITIVCMASFLLLVAALY) threads the bilayer. The Cytoplasmic segment spans residues 408–485 (GCCHQRISQR…DLDEEEDTHL (78 aa)). T445 bears the Phosphothreonine mark. Phosphoserine is present on S464. T483 is modified (phosphothreonine).

The protein belongs to the podocalyxin family. Monomer; when associated with the membrane raft. Oligomer; when integrated in the apical membrane. Interacts with NHERF2. Interacts (via the C-terminal PDZ-binding motif DTHL) with NHERF1 (via the PDZ domains); the interaction take place early in the secretory pathway and is necessary for its apical membrane sorting. Found in a complex with EZR, PODXL and NHERF2. Associates with the actin cytoskeleton through complex formation with EZR and NHERF2. Interacts (via the C-terminal PDZ-binding motif DTHL) with NHERF1 (via the PDZ domains); interaction is not detected in glomerular epithelium cells. Interacts (via the C-terminal PDZ-binding motif DTHL) with NHERF2 (via the PDZ 1 domain); interaction is detected in glomerular epithelium cells. Interacts with EZR. N- and O-linked glycosylated. Sialoglycoprotein. In terms of tissue distribution, glomerular epithelium cell (podocyte) (at protein level).

The protein resides in the apical cell membrane. It localises to the cell projection. It is found in the microvillus. The protein localises to the membrane raft. Its subcellular location is the lamellipodium. The protein resides in the filopodium. It localises to the ruffle. It is found in the membrane. Functionally, involved in the regulation of both adhesion and cell morphology and cancer progression. Functions as an anti-adhesive molecule that maintains an open filtration pathway between neighboring foot processes in the podocyte by charge repulsion. Acts as a pro-adhesive molecule, enhancing the adherence of cells to immobilized ligands, increasing the rate of migration and cell-cell contacts in an integrin-dependent manner. Induces the formation of apical actin-dependent microvilli. Involved in the formation of a preapical plasma membrane subdomain to set up initial epithelial polarization and the apical lumen formation during renal tubulogenesis. Plays a role in cancer development and aggressiveness by inducing cell migration and invasion through its interaction with the actin-binding protein EZR. Affects EZR-dependent signaling events, leading to increased activities of the MAPK and PI3K pathways in cancer cells. In Rattus norvegicus (Rat), this protein is Podocalyxin (Podxl).